Reading from the N-terminus, the 267-residue chain is L-aspartate dehydrogenase (267 aa).

NAD(+)-binding residues include A124 and N190. H218 is a catalytic residue.

Belongs to the L-aspartate dehydrogenase family.

The enzyme catalyses L-aspartate + NADP(+) + H2O = oxaloacetate + NH4(+) + NADPH + H(+). It catalyses the reaction L-aspartate + NAD(+) + H2O = oxaloacetate + NH4(+) + NADH + H(+). It functions in the pathway cofactor biosynthesis; NAD(+) biosynthesis; iminoaspartate from L-aspartate (dehydrogenase route): step 1/1. Specifically catalyzes the NAD or NADP-dependent dehydrogenation of L-aspartate to iminoaspartate. The polypeptide is L-aspartate dehydrogenase (Methanococcus maripaludis (strain C5 / ATCC BAA-1333)).